We begin with the raw amino-acid sequence, 286 residues long: Beta-lactamase SHV-46 (286 aa).

The N-terminal stretch at 1 to 21 (MRYIRLCIISLLATLPLAVHA) is a signal peptide. The active-site Acyl-ester intermediate is serine 66. Cysteine 73 and cysteine 119 are oxidised to a cystine. The Proton acceptor role is filled by glutamate 164. Residue 230–232 (KTG) participates in substrate binding.

The protein belongs to the class-A beta-lactamase family.

It carries out the reaction a beta-lactam + H2O = a substituted beta-amino acid. The protein is Beta-lactamase SHV-46 (bla) of Klebsiella oxytoca.